The primary structure comprises 127 residues: Venom protein family 16 protein 1 (127 aa).

The signal sequence occupies residues 1–18 (MWIWYSLLFFGVCHLAHS).

In terms of tissue distribution, expressed by the venom gland (anterior main gland) (at protein level).

Its subcellular location is the secreted. The sequence is that of Venom protein family 16 protein 1 from Platymeris rhadamanthus (Red spot assassin bug).